Reading from the N-terminus, the 375-residue chain is tRNA (guanine(26)-N(2))-dimethyltransferase (375 aa).

One can recognise a Trm1 methyltransferase domain in the interval 2–368 (KYITEGNTKL…AKLIDIVEFI (367 aa)). Positions 35, 66, 89, 116, and 117 each coordinate S-adenosyl-L-methionine.

The protein belongs to the class I-like SAM-binding methyltransferase superfamily. Trm1 family.

The enzyme catalyses guanosine(26) in tRNA + 2 S-adenosyl-L-methionine = N(2)-dimethylguanosine(26) in tRNA + 2 S-adenosyl-L-homocysteine + 2 H(+). Its function is as follows. Dimethylates a single guanine residue at position 26 of a number of tRNAs using S-adenosyl-L-methionine as donor of the methyl groups. The chain is tRNA (guanine(26)-N(2))-dimethyltransferase from Methanococcus aeolicus (strain ATCC BAA-1280 / DSM 17508 / OCM 812 / Nankai-3).